The sequence spans 468 residues: ATP synthase subunit beta (468 aa).

155 to 162 (GGAGVGKT) contributes to the ATP binding site.

It belongs to the ATPase alpha/beta chains family. In terms of assembly, F-type ATPases have 2 components, CF(1) - the catalytic core - and CF(0) - the membrane proton channel. CF(1) has five subunits: alpha(3), beta(3), gamma(1), delta(1), epsilon(1). CF(0) has three main subunits: a(1), b(2) and c(9-12). The alpha and beta chains form an alternating ring which encloses part of the gamma chain. CF(1) is attached to CF(0) by a central stalk formed by the gamma and epsilon chains, while a peripheral stalk is formed by the delta and b chains.

It localises to the cell membrane. It carries out the reaction ATP + H2O + 4 H(+)(in) = ADP + phosphate + 5 H(+)(out). Functionally, produces ATP from ADP in the presence of a proton gradient across the membrane. The catalytic sites are hosted primarily by the beta subunits. The sequence is that of ATP synthase subunit beta from Bacillus cereus (strain B4264).